A 354-amino-acid chain; its full sequence is Guanine nucleotide-binding protein alpha-2 subunit (354 aa).

One can recognise a G-alpha domain in the interval 33–354 (KIYKVLLLGA…QHSLKEAGMF (322 aa)). Residues 36-49 (KVLLLGASDSGKST) form a G1 motif region. GTP is bound by residues D44, S45, G46, K47, S48, T49, D148, L173, T179, G201, N269, K270, D272, and A326. Position 48 (S48) interacts with Mg(2+). Residues 171–179 (DILRSRNST) form a G2 motif region. T179 is a binding site for Mg(2+). The tract at residues 194-203 (IRMFDVGGQR) is G3 motif. The G4 motif stretch occupies residues 265–272 (ILFLNKFD). Residues 324 to 329 (TTAVDT) form a G5 motif region.

This sequence belongs to the G-alpha family. G proteins are composed of 3 units; alpha, beta and gamma. Binding of the beta-gamma subunit complex (git5-git11) to the alpha subunit (gpa2) facilitates interaction with GPCR git3. Interacts with GPCR git3; the interaction is direct and leads to activation of gpa2 upon glucose stimulation. Interacts with adenylate cyclase cyr1 (via N-terminus); the interaction is direct and serves to activate adenylate cyclase and cAMP-PKA signaling, to repress sexual development and gluconeogenesis. Requires Mg(2+) as cofactor.

The protein resides in the cell membrane. Its function is as follows. Alpha subunit of the heterotrimeric guanine nucleotide-binding protein (G protein) involved in glucose-induced cAMP signaling. Binds to its cognate transmembrane receptor git3, which senses extracellular glucose, and activates cAMP-PKA signaling to repress sexual development and gluconeogenesis. This Schizosaccharomyces pombe (strain 972 / ATCC 24843) (Fission yeast) protein is Guanine nucleotide-binding protein alpha-2 subunit.